A 211-amino-acid polypeptide reads, in one-letter code: Shikimate kinase (211 aa).

The interval 1–23 is disordered; the sequence is MNASANLCAASDNDPQPGDQEAA. 50-55 provides a ligand contact to ATP; it reads GAGKTT. T54 lines the Mg(2+) pocket. Residues D72, R96, and G118 each contribute to the substrate site. ATP is bound at residue R156. Substrate is bound at residue R175.

The protein belongs to the shikimate kinase family. Monomer. The cofactor is Mg(2+).

It localises to the cytoplasm. The enzyme catalyses shikimate + ATP = 3-phosphoshikimate + ADP + H(+). The protein operates within metabolic intermediate biosynthesis; chorismate biosynthesis; chorismate from D-erythrose 4-phosphate and phosphoenolpyruvate: step 5/7. Catalyzes the specific phosphorylation of the 3-hydroxyl group of shikimic acid using ATP as a cosubstrate. The protein is Shikimate kinase of Bordetella bronchiseptica (strain ATCC BAA-588 / NCTC 13252 / RB50) (Alcaligenes bronchisepticus).